The sequence spans 174 residues: Larval cuticle protein LCP-22 (174 aa).

A signal peptide spans 1–16 (MKFAVVFACMVAAVAA). The region spanning 82–153 (DGSYTYFYET…PTGNAIPTSP (72 aa)) is the Chitin-binding type R&amp;R domain.

Component of the cuticle of the larva of Bombyx mori. The protein is Larval cuticle protein LCP-22 (LCP22) of Bombyx mori (Silk moth).